Here is a 229-residue protein sequence, read N- to C-terminus: ATPase SWSAP1 (229 aa).

The segment at 209–229 is disordered; sequence PWPTQAGDPSSGKGSSSGGQP.

In terms of assembly, interacts with ZSWIM7; they form a functional complex involved in homologous recombination repair and stabilize each other. Interacts with RAD51, RAD51B, RAD51C, RAD51D and XRCC3; involved in homologous recombination repair.

Its subcellular location is the nucleus. ATPase which is preferentially stimulated by single-stranded DNA and is involved in homologous recombination repair (HRR). Has a DNA-binding activity which is independent of its ATPase activity. This is ATPase SWSAP1 (SWSAP1) from Homo sapiens (Human).